Here is a 419-residue protein sequence, read N- to C-terminus: Chalcone synthase D (419 aa).

Cys164 is an active-site residue.

Belongs to the thiolase-like superfamily. Chalcone/stilbene synthases family.

The enzyme catalyses (E)-4-coumaroyl-CoA + 3 malonyl-CoA + 3 H(+) = 2',4,4',6'-tetrahydroxychalcone + 3 CO2 + 4 CoA. Its pathway is secondary metabolite biosynthesis; flavonoid biosynthesis. The primary product of this enzyme is 4,2',4',6'-tetrahydroxychalcone (also termed naringenin-chalcone or chalcone) which can under specific conditions spontaneously isomerize into naringenin. The chain is Chalcone synthase D (CHSD) from Petunia hybrida (Petunia).